The following is a 344-amino-acid chain: Protein BREVIS RADIX (344 aa).

Positions 139-194 (KEWMAQVEPGVHITFASLPTGGNDLKRIRFSREMFDKWQAQRWWGENYDKIVELYN) constitute a BRX 1 domain. Residues 203–286 (LQTPARSDDQ…DPPSMSNASE (84 aa)) are disordered. Residues 223-233 (DSARESKDWTP) are compositionally biased toward basic and acidic residues. Residues 248–264 (YGGSSNYGPGSYHGGPP) show a composition bias toward low complexity. The region spanning 289 to 344 (AEWIEEDEPGVYITIRQLSDGTRELRRVRFSRERFGEVHAKTWWEQNRERIQTQYL) is the BRX 2 domain.

It belongs to the BRX family. As to quaternary structure, homodimer and heterodimer with BRXL1. Interacts with NGA1 and ARF5. In terms of tissue distribution, expressed in the developing protophloem up to the elongation zone in root meristem of young seedlings, in the columella and the phloem vasculature throughout the root and in the phloem vasculature in the shoot. Detected in the shoot meristem and in primordia. Low expression in stomata. Confined to sieve element precursor cells and to protophloem.

Its subcellular location is the nucleus. It localises to the cell membrane. Acts as a regulator of cell proliferation and elongation in the root and shoot. Regulates roots architecture and primary root protophloem differentiation. BRX, BAM3, and CLE45 act together to regulate the transition of protophloem cells from proliferation to differentiation, thus impinging on postembryonic growth capacity of the root meristem. Probable transcription regulator. Regulated by the auxin response factor ARF5. Polarly localized in vascular cells and subject to endocytic recycling. Required for CPD expression and for correct nuclear auxin response. Mediates cross-talk between the auxin and brassinosteroid pathways. BRX is a target for auxin-induced, proteasome-mediated degradation. This is Protein BREVIS RADIX from Arabidopsis thaliana (Mouse-ear cress).